The following is a 574-amino-acid chain: Envelope glycoprotein (574 aa).

A signal peptide spans 1–22 (MTLKDIPFWRVLLIFQTARVYA). Over 23–514 (GFGDPREAIT…TGLHGLLPYL (492 aa)) the chain is Extracellular. Residues Asn-117 and Asn-233 are each glycosylated (N-linked (GlcNAc...) asparagine; by host). The short motif at 243-246 (CWLC) is the CXXC element. 3 cysteine pairs are disulfide-bonded: Cys-243–Cys-246, Cys-243–Cys-471, and Cys-463–Cys-470. N-linked (GlcNAc...) asparagine; by host glycosylation is found at Asn-260, Asn-267, Asn-288, Asn-298, Asn-312, Asn-318, Asn-327, and Asn-345. Residues 386–406 (FIPLLVGLGITTAVSTGTAGL) are fusion peptide. Coiled coils occupy residues 407–457 (GYSI…LLTA) and 467–503 (QEKCCFYANKSGIVRDKIKRLQEDLEKRRKEIIDNPF). Positions 446–462 (LQNRRGLDLLTAEQGGI) are immunosuppression. A CX6CC motif is present at residues 463 to 471 (CLALQEKCC). N-linked (GlcNAc...) asparagine; by host glycosylation is present at Asn-475. A helical membrane pass occupies residues 515 to 535 (LPLLGPLFCLLLLITFGPLIF). The Cytoplasmic segment spans residues 536–574 (NKIITFVKQQIDAIQAKPIQVHYHRLEQEDNGGVYLRVS). The short motif at 558 to 561 (YHRL) is the YXXL motif; contains endocytosis signal element.

As to quaternary structure, the mature envelope protein (Env) consists of a trimer of SU-TM heterodimers attached by a labile interchain disulfide bond. Specific enzymatic cleavages in vivo yield mature proteins. Envelope glycoproteins are synthesized as an inactive precursor that is N-glycosylated and processed likely by host cell furin or by a furin-like protease in the Golgi to yield the mature SU and TM proteins. The cleavage site between SU and TM requires the minimal sequence [KR]-X-[KR]-R. The R-peptide is released from the C-terminus of the cytoplasmic tail of the TM protein upon particle formation as a result of proteolytic cleavage by the viral protease. Cleavage of this peptide is required for TM to become fusogenic. In terms of processing, the CXXC motif is highly conserved across a broad range of retroviral envelope proteins. It is thought to participate in the formation of a labile disulfide bond possibly with the CX6CC motif present in the transmembrane protein. Isomerization of the intersubunit disulfide bond to an SU intrachain disulfide bond is thought to occur upon receptor recognition in order to allow membrane fusion.

It localises to the virion membrane. It is found in the host cell membrane. Its function is as follows. The surface protein (SU) attaches the virus to the host cell by binding to its receptor. This interaction triggers the refolding of the transmembrane protein (TM) and is thought to activate its fusogenic potential by unmasking its fusion peptide. Fusion occurs at the host cell plasma membrane. In terms of biological role, the transmembrane protein (TM) acts as a class I viral fusion protein. Under the current model, the protein has at least 3 conformational states: pre-fusion native state, pre-hairpin intermediate state, and post-fusion hairpin state. During viral and target cell membrane fusion, the coiled coil regions (heptad repeats) assume a trimer-of-hairpins structure, positioning the fusion peptide in close proximity to the C-terminal region of the ectodomain. The formation of this structure appears to drive apposition and subsequent fusion of viral and target cell membranes. Membranes fusion leads to delivery of the nucleocapsid into the cytoplasm. The polypeptide is Envelope glycoprotein (env) (Macaca mulatta (Rhesus macaque)).